The following is a 793-amino-acid chain: Coiled-coil domain-containing protein 175 (793 aa).

Coiled coils occupy residues 131 to 163 (EINTIKMRITRTENEIELLKKKITDLTKYNEAL), 205 to 377 (KRED…VLSE), 431 to 535 (KTVY…MLMK), 562 to 679 (LPQL…KYRE), and 716 to 745 (LVDNGEETLQDINNLTDKLRERDEKMQHVS).

The sequence is that of Coiled-coil domain-containing protein 175 (CCDC175) from Homo sapiens (Human).